The sequence spans 667 residues: Probable sulfate permease C320.05 (667 aa).

Residues 1–27 are disordered; the sequence is MSSPSENHLLGPKTSFIDNRTSTSRPL. Polar residues predominate over residues 16-25; sequence FIDNRTSTSR. The next 12 membrane-spanning stretches (helical) occupy residues 77-97, 102-122, 162-182, 198-218, 240-260, 275-295, 301-321, 336-356, 368-388, 405-425, 433-453, and 465-485; these read IIWDVLAGCSTACLSVPIALS, FLGVPPIYILTGTAIGPILYC, ILVTGLIAFIAGIINLAAGLF, GCILSISMIIMINQGSVFFGF, MSKANIYTTILSCITISLLIG, IVSIPDAVIILLLGSFLSKKF, YGIAILGEIKTTILLPKLPLP, GVMCSFLAFIDTVIAVKAISL, LISLGAANIGSSLFCGLPICG, VATIACSVLILLATFFIMPVF, LASMVVSLGVSLFADAAVEIF, and GIIFSIATCTMMFGLETGIIF. The region spanning 532–657 is the STAS domain; sequence SSTAVESAPR…DHVQDSIKKV (126 aa).

This sequence belongs to the SLC26A/SulP transporter (TC 2.A.53) family.

It localises to the endoplasmic reticulum membrane. Functionally, possible sulfate transporter. This Schizosaccharomyces pombe (strain 972 / ATCC 24843) (Fission yeast) protein is Probable sulfate permease C320.05.